Consider the following 248-residue polypeptide: Large ribosomal subunit protein uL2 (248 aa).

The tract at residues 203–248 (AHPAGGGHHPKGLTPAPRNAPPGRKVGHIAPRRTGRKKGASRTPTQ) is disordered. The segment covering 227-242 (KVGHIAPRRTGRKKGA) has biased composition (basic residues).

This sequence belongs to the universal ribosomal protein uL2 family. Part of the 50S ribosomal subunit. Forms a bridge to the 30S subunit in the 70S ribosome.

One of the primary rRNA binding proteins. Required for association of the 30S and 50S subunits to form the 70S ribosome, for tRNA binding and peptide bond formation. It has been suggested to have peptidyltransferase activity; this is somewhat controversial. Makes several contacts with the 16S rRNA in the 70S ribosome. In Thermofilum pendens (strain DSM 2475 / Hrk 5), this protein is Large ribosomal subunit protein uL2.